The primary structure comprises 38 residues: MTQTNPNEQSVELNRTSLYWGLLLIFVLAVLFSNYFFN.

A helical transmembrane segment spans residues 17-37; that stretch reads SLYWGLLLIFVLAVLFSNYFF.

The protein belongs to the PsbL family. As to quaternary structure, PSII is composed of 1 copy each of membrane proteins PsbA, PsbB, PsbC, PsbD, PsbE, PsbF, PsbH, PsbI, PsbJ, PsbK, PsbL, PsbM, PsbT, PsbX, PsbY, PsbZ, Psb30/Ycf12, at least 3 peripheral proteins of the oxygen-evolving complex and a large number of cofactors. It forms dimeric complexes.

The protein localises to the plastid. The protein resides in the chloroplast thylakoid membrane. Functionally, one of the components of the core complex of photosystem II (PSII). PSII is a light-driven water:plastoquinone oxidoreductase that uses light energy to abstract electrons from H(2)O, generating O(2) and a proton gradient subsequently used for ATP formation. It consists of a core antenna complex that captures photons, and an electron transfer chain that converts photonic excitation into a charge separation. This subunit is found at the monomer-monomer interface and is required for correct PSII assembly and/or dimerization. The polypeptide is Photosystem II reaction center protein L (Gnetum gnemon (Spanish joint-fir)).